Reading from the N-terminus, the 388-residue chain is Chorismate synthase (388 aa).

Residues Arg39 and Arg45 each contribute to the NADP(+) site. FMN contacts are provided by residues 130–132 (RSS), 251–252 (NA), Gly296, 311–315 (KPIPT), and Arg337.

It belongs to the chorismate synthase family. Homotetramer. Requires FMNH2 as cofactor.

The catalysed reaction is 5-O-(1-carboxyvinyl)-3-phosphoshikimate = chorismate + phosphate. The protein operates within metabolic intermediate biosynthesis; chorismate biosynthesis; chorismate from D-erythrose 4-phosphate and phosphoenolpyruvate: step 7/7. Functionally, catalyzes the anti-1,4-elimination of the C-3 phosphate and the C-6 proR hydrogen from 5-enolpyruvylshikimate-3-phosphate (EPSP) to yield chorismate, which is the branch point compound that serves as the starting substrate for the three terminal pathways of aromatic amino acid biosynthesis. This reaction introduces a second double bond into the aromatic ring system. The sequence is that of Chorismate synthase from Streptococcus agalactiae serotype III (strain NEM316).